The following is a 479-amino-acid chain: Phosphoglycerate kinase, glycosomal (479 aa).

(2R)-3-phosphoglycerate contacts are provided by Val-23, Asp-24, Phe-25, Asn-26, Arg-39, Ser-61, His-62, Gly-64, Arg-65, Arg-132, His-168, and Arg-169. 2 residues coordinate ADP: Gly-214 and Ala-215. Gly-214 lines the CDP pocket. Residues Ala-215 and Lys-216 each coordinate AMP. ATP is bound at residue Ala-215. Ala-215 contacts Mg(2+). (2R)-3-phosphoglycerate is bound at residue Lys-216. Position 219 (Asp-219) interacts with CDP. Asp-219 provides a ligand contact to Mg(2+). ADP is bound by residues Lys-220 and Gly-238. Lys-220 lines the AMP pocket. Lys-220 is a binding site for ATP. Gly-238 is a binding site for CDP. AMP is bound by residues Ala-239 and Ala-311. Residues Ala-239 and Ala-311 each coordinate ATP. Residues Ala-311 and Asn-335 each contribute to the ADP site. Residues Gly-336 and Phe-341 each contribute to the CDP site. ADP contacts are provided by Phe-341, Glu-342, Asp-374, and Ser-375. An AMP-binding site is contributed by Glu-342. Positions 342, 374, and 375 each coordinate ATP. Asp-374 provides a ligand contact to Mg(2+).

This sequence belongs to the phosphoglycerate kinase family. Monomer. Mg(2+) is required as a cofactor.

Its subcellular location is the glycosome. It catalyses the reaction (2R)-3-phosphoglycerate + ATP = (2R)-3-phospho-glyceroyl phosphate + ADP. It functions in the pathway carbohydrate degradation; glycolysis; pyruvate from D-glyceraldehyde 3-phosphate: step 2/5. The polypeptide is Phosphoglycerate kinase, glycosomal (PGKC) (Leishmania major).